The primary structure comprises 102 residues: Salivary protein Salp9 (102 aa).

An N-terminal signal peptide occupies residues 1–21 (MGLTEIMLVLVSLAFVATAAA). Asparagine 26 and asparagine 87 each carry an N-linked (GlcNAc...) asparagine glycan. Positions 83–102 (SGVPNDTDAKIEETEEELEA) are disordered.

The protein belongs to the salp14 family. In terms of tissue distribution, salivary gland (at protein level). Saliva (at protein level). Midgut.

It is found in the secreted. Its function is as follows. Salivary protein that facilitates blood feeding of adult ticks on vertebrate species. Inhibits the lectin pathway of complement system activation in the host. The polypeptide is Salivary protein Salp9 (Ixodes scapularis (Black-legged tick)).